The primary structure comprises 284 residues: MSLSIEALLKRSIQSLTLEGSDSPQVDAAVLLCHVLDKPRSYLLTWPEKIVSDEELGNFNALLERRLAGEPIAYIVGYREFWSLPLKVSPTTLIPRPDTERLVEVALDHLTPNAQSILDLGTGTGAIALAIASEMPTLNVIGVDYQDDAVELAKGNAKINHINNVEFRQGSWFEPISLSDKFDIIVSNPPYIDGNDPHLSEGDVRFEPQTALVAEQNGFSDLIHIMQHGREYLLNGGWLMMEHGFEQGEQLRHFFEEHGYINVKTEQDYAGNDRVTLGQWVVDN.

Residues 121–125 (GTGTG), Asp144, Trp172, and Asn188 contribute to the S-adenosyl-L-methionine site. Substrate is bound at residue 188 to 191 (NPPY).

Belongs to the protein N5-glutamine methyltransferase family. PrmC subfamily.

The enzyme catalyses L-glutaminyl-[peptide chain release factor] + S-adenosyl-L-methionine = N(5)-methyl-L-glutaminyl-[peptide chain release factor] + S-adenosyl-L-homocysteine + H(+). In terms of biological role, methylates the class 1 translation termination release factors RF1/PrfA and RF2/PrfB on the glutamine residue of the universally conserved GGQ motif. This is Release factor glutamine methyltransferase from Aliivibrio fischeri (strain ATCC 700601 / ES114) (Vibrio fischeri).